The chain runs to 349 residues: MAILLQKSKVMKIAGMSLAMLLAACSSDQSYKRQVNGDYAYLEAPPLKALNVPAGMILPLQNGEYDIPPTISKGLIGKELDIRPPSQALALLSGSRTENSIKSSKLLLENTPENSNLWSQINNVLLKKGDKISQRDDANQTLVTDWIEWQRTDEDVPYQTRHRISIAHQNYQIELSVANEGLRQGGQQVTDPVEIQRYNALMLNELIEGVNRQRERMSDNPAAHNLGPLDVQSGGDTSGLPQMIVRAPYNIVWDRLPAALEKVGMKVGNRSRSTGSITVAYKSLSTSEWKSMGVNEPSISEGDYKLQIGDLNNRSSLQFISDKGKPLTQVQNDELVAVLKAAFSQTAGL.

Residues 1–24 (MAILLQKSKVMKIAGMSLAMLLAA) form the signal peptide. Residue Cys-25 is the site of N-palmitoyl cysteine attachment. Cys-25 carries the S-diacylglycerol cysteine lipid modification.

The protein belongs to the BamC family. In terms of assembly, part of the Bam complex, which is composed of the outer membrane protein BamA, and four lipoproteins BamB, BamC, BamD and BamE.

Its subcellular location is the cell outer membrane. In terms of biological role, part of the outer membrane protein assembly complex, which is involved in assembly and insertion of beta-barrel proteins into the outer membrane. The polypeptide is Outer membrane protein assembly factor BamC (Photorhabdus asymbiotica subsp. asymbiotica (strain ATCC 43949 / 3105-77) (Xenorhabdus luminescens (strain 2))).